Reading from the N-terminus, the 292-residue chain is Ribosomal protein L11 methyltransferase (292 aa).

S-adenosyl-L-methionine-binding residues include threonine 144, glycine 165, aspartate 187, and asparagine 229.

Belongs to the methyltransferase superfamily. PrmA family.

It is found in the cytoplasm. The enzyme catalyses L-lysyl-[protein] + 3 S-adenosyl-L-methionine = N(6),N(6),N(6)-trimethyl-L-lysyl-[protein] + 3 S-adenosyl-L-homocysteine + 3 H(+). In terms of biological role, methylates ribosomal protein L11. The sequence is that of Ribosomal protein L11 methyltransferase from Pseudomonas putida (strain W619).